A 127-amino-acid chain; its full sequence is Two-component response regulator ORR41 (127 aa).

The region spanning 7–125 (RVLLVEDEEI…KLGVILAKFR (119 aa)) is the Response regulatory domain. The residue at position 60 (Asp60) is a 4-aspartylphosphate.

The protein belongs to the ARR family. Type-C subfamily. Two-component system major event consists of a His-to-Asp phosphorelay between a sensor histidine kinase (HK) and a response regulator (RR). In plants, the His-to-Asp phosphorelay involves an additional intermediate named Histidine-containing phosphotransfer protein (HPt). This multistep phosphorelay consists of a His-Asp-His-Asp sequential transfer of a phosphate group between first a His and an Asp of the HK protein, followed by the transfer to a conserved His of the HPt protein and finally the transfer to an Asp in the receiver domain of the RR protein.

Its function is as follows. Functions as a response regulator involved in His-to-Asp phosphorelay signal transduction system. Phosphorylation of the Asp residue in the receiver domain activates the ability of the protein to promote the transcription of target genes. May directly activate some type-A response regulators in response to cytokinins. The protein is Two-component response regulator ORR41 of Oryza sativa subsp. japonica (Rice).